Consider the following 847-residue polypeptide: Pollen-specific leucine-rich repeat extensin-like protein 2 (847 aa).

The first 20 residues, 1-20 (MERPFGCFFILLLISYTVVA), serve as a signal peptide directing secretion. LRR repeat units lie at residues 45-71 (INKV…AWKK), 106-130 (LTVV…LGLM), 131-153 (TDLA…SLSK), 155-178 (ALMY…SLSW), 179-202 (PSLK…IFDK), 204-224 (LDAI…TIGK), 226-248 (KASV…IGNM), and 249-273 (KNLN…GLLN). 2 N-linked (GlcNAc...) asparagine glycosylation sites follow: Asn-260 and Asn-274. LRR repeat units lie at residues 296-319 (LASV…KFCK) and 321-343 (PNLD…CVPG). Positions 381-847 (KDKCSGGSNG…SPPPPMFQGY (467 aa)) are disordered. Residues 438–484 (PKHESPKPEEPENKHELPKQKESPKPQPSKPEDSPKPEQPKPEESPK) are compositionally biased toward basic and acidic residues. 2 stretches are compositionally biased toward pro residues: residues 485–499 (PEQP…PVSP) and 533–642 (VPPP…PPPT). Residues 522–847 (SPPPPKVEDT…SPPPPMFQGY (326 aa)) form a contains the Ser-Pro(4) repeats region. Polar residues-rich tracts occupy residues 667-682 (QVPT…QILS), 688-720 (TPVQ…SPVQ), and 726-752 (QAPT…SQAP). Composition is skewed to low complexity over residues 768 to 783 (PVQS…SSPE) and 797 to 811 (NPSS…TDTS). Residues 838-847 (SPPPPMFQGY) are compositionally biased toward pro residues.

Hydroxylated on proline residues in the S-P-P-P-P repeat. Post-translationally, O-glycosylated on hydroxyprolines. In terms of tissue distribution, expressed in flowers, stamen, pollen, and pollinated carpels (at protein level).

The protein localises to the secreted. Its subcellular location is the cell wall. Functionally, modulates cell morphogenesis by regulating cell wall formation and assembly, and/or growth polarization. The sequence is that of Pollen-specific leucine-rich repeat extensin-like protein 2 (PEX2) from Arabidopsis thaliana (Mouse-ear cress).